Consider the following 142-residue polypeptide: Small ribosomal subunit protein bS6 (142 aa).

Residues 110 to 133 (NKKPSHAKEKHEKTEHTHSHHTEE) show a composition bias toward basic and acidic residues. Residues 110–142 (NKKPSHAKEKHEKTEHTHSHHTEETESVGSHSK) are disordered.

It belongs to the bacterial ribosomal protein bS6 family.

Its function is as follows. Binds together with bS18 to 16S ribosomal RNA. The sequence is that of Small ribosomal subunit protein bS6 from Helicobacter pylori (strain Shi470).